The following is a 198-amino-acid chain: Tumor necrosis factor alpha-induced protein 8 (198 aa).

The stretch at 49–83 (EVLDELYRVTKEYTQNKKEAEKIIKNLIKTVIKLA) forms a coiled coil.

It belongs to the TNFAIP8 family.

The protein localises to the cytoplasm. Acts as a negative mediator of apoptosis. Suppresses the TNF-mediated apoptosis by inhibiting caspase-8 activity but not the processing of procaspase-8, subsequently resulting in inhibition of BID cleavage and caspase-3 activation. This Bos taurus (Bovine) protein is Tumor necrosis factor alpha-induced protein 8 (TNFAIP8).